A 198-amino-acid chain; its full sequence is Ribonuclease HII (198 aa).

Residues 10–198 (QLVAGVDEVG…PVKRALGLAS (189 aa)) enclose the RNase H type-2 domain. Positions 16, 17, and 108 each coordinate a divalent metal cation.

This sequence belongs to the RNase HII family. Mn(2+) is required as a cofactor. Mg(2+) serves as cofactor.

Its subcellular location is the cytoplasm. It carries out the reaction Endonucleolytic cleavage to 5'-phosphomonoester.. Endonuclease that specifically degrades the RNA of RNA-DNA hybrids. The polypeptide is Ribonuclease HII (Escherichia coli O81 (strain ED1a)).